We begin with the raw amino-acid sequence, 819 residues long: Aminopeptidase O (819 aa).

His-479 serves as a coordination point for Zn(2+). Catalysis depends on Glu-480, which acts as the Proton acceptor. The Zn(2+) site is built by His-483 and Glu-502. The Nucleolar localization signal signature appears at 689-699 (RRPRKRKRREK).

This sequence belongs to the peptidase M1 family. Zn(2+) serves as cofactor.

Its subcellular location is the nucleus. The protein resides in the nucleolus. It is found in the cytoplasm. Functionally, aminopeptidase which catalyzes the hydrolysis of amino acid residues from the N-terminus of peptide or protein substrates. The chain is Aminopeptidase O from Homo sapiens (Human).